The sequence spans 272 residues: Phosphate import ATP-binding protein PstB (272 aa).

Residues 26 to 267 (LDIKNLDLYY…PSEKQTEDYI (242 aa)) form the ABC transporter domain. 58–65 (GPSGCGKS) is a binding site for ATP.

It belongs to the ABC transporter superfamily. Phosphate importer (TC 3.A.1.7) family. As to quaternary structure, the complex is composed of two ATP-binding proteins (PstB), two transmembrane proteins (PstC and PstA) and a solute-binding protein (PstS).

The protein resides in the cell inner membrane. The enzyme catalyses phosphate(out) + ATP + H2O = ADP + 2 phosphate(in) + H(+). In terms of biological role, part of the ABC transporter complex PstSACB involved in phosphate import. Responsible for energy coupling to the transport system. This chain is Phosphate import ATP-binding protein PstB, found in Idiomarina loihiensis (strain ATCC BAA-735 / DSM 15497 / L2-TR).